An 84-amino-acid polypeptide reads, in one-letter code: MKGMILFISCLLLIDIVVGGKEGYLMDHEGCKLSCFIRPSGYCGRECTLKKGSSGYCAWPACYCYGLPNWVKVWDRATNKCGKK.

The signal sequence occupies residues 1-19; that stretch reads MKGMILFISCLLLIDIVVG. Residues 21-82 enclose the LCN-type CS-alpha/beta domain; sequence KEGYLMDHEG…VWDRATNKCG (62 aa). Cystine bridges form between cysteine 31/cysteine 81, cysteine 35/cysteine 57, cysteine 43/cysteine 62, and cysteine 47/cysteine 64. Cysteine amide is present on cysteine 81.

In terms of tissue distribution, expressed by the venom gland.

It is found in the secreted. Functionally, beta toxins bind voltage-independently at site-4 of sodium channels (Nav) and shift the voltage of activation toward more negative potentials thereby affecting sodium channel activation and promoting spontaneous and repetitive firing. This toxin is active only on mammals. Is toxic to mice. The protein is Toxin Tst1 of Tityus stigmurus (Brazilian scorpion).